The sequence spans 243 residues: NAD(P)H-quinone oxidoreductase subunit K (243 aa).

Residues cysteine 59, cysteine 60, cysteine 124, and cysteine 155 each coordinate [4Fe-4S] cluster.

Belongs to the complex I 20 kDa subunit family. In terms of assembly, NDH-1 can be composed of about 15 different subunits; different subcomplexes with different compositions have been identified which probably have different functions. Requires [4Fe-4S] cluster as cofactor.

The protein resides in the cellular thylakoid membrane. The catalysed reaction is a plastoquinone + NADH + (n+1) H(+)(in) = a plastoquinol + NAD(+) + n H(+)(out). It catalyses the reaction a plastoquinone + NADPH + (n+1) H(+)(in) = a plastoquinol + NADP(+) + n H(+)(out). Its function is as follows. NDH-1 shuttles electrons from an unknown electron donor, via FMN and iron-sulfur (Fe-S) centers, to quinones in the respiratory and/or the photosynthetic chain. The immediate electron acceptor for the enzyme in this species is believed to be plastoquinone. Couples the redox reaction to proton translocation, and thus conserves the redox energy in a proton gradient. Cyanobacterial NDH-1 also plays a role in inorganic carbon-concentration. The protein is NAD(P)H-quinone oxidoreductase subunit K of Picosynechococcus sp. (strain ATCC 27264 / PCC 7002 / PR-6) (Agmenellum quadruplicatum).